A 122-amino-acid chain; its full sequence is Large ribosomal subunit protein uL14 (122 aa).

It belongs to the universal ribosomal protein uL14 family. Part of the 50S ribosomal subunit. Forms a cluster with proteins L3 and L19. In the 70S ribosome, L14 and L19 interact and together make contacts with the 16S rRNA in bridges B5 and B8.

Functionally, binds to 23S rRNA. Forms part of two intersubunit bridges in the 70S ribosome. This is Large ribosomal subunit protein uL14 from Chlorobaculum tepidum (strain ATCC 49652 / DSM 12025 / NBRC 103806 / TLS) (Chlorobium tepidum).